The primary structure comprises 784 residues: Transcriptional activator somA (784 aa).

Residues 43–75 (MINNLNTYIYDYFLKRGYHECARALVKDESIKL) form the LisH domain. Residues 75 to 84 (LNTEPPTKTS) show a composition bias toward polar residues. Disordered regions lie at residues 75-122 (LNTE…PNLA), 212-295 (GLSQ…SQAL), 424-726 (MMAR…DLSI), and 764-784 (GFDP…GDGL). Positions 103–117 (DSKDGDKIKIPDDLP) are enriched in basic and acidic residues. The segment covering 215-233 (QQQIAQLQKNQQMHMMQQM) has biased composition (low complexity). Residues 234–244 (QREHSDMDMNG) show a composition bias toward basic and acidic residues. Low complexity predominate over residues 247 to 259 (PQSPSSAENAPSP). The segment covering 453 to 467 (SPQGSRAGTSPNPNE) has biased composition (polar residues). The span at 564–592 (QQQQGQPMGPQQSPAQQPQSTGTPQTQNS) shows a compositional bias: low complexity. The segment covering 607 to 624 (RTSPQSQNAAPPTPQQAN) has biased composition (polar residues). Positions 629–638 (KKREPKDTAR) are enriched in basic and acidic residues. 2 stretches are compositionally biased toward low complexity: residues 644–661 (KQPA…TPSS) and 691–701 (PTTSAPQQPTS). Pro residues predominate over residues 702 to 715 (APAPQPIVQQPPPD).

This sequence belongs to the FLO8 family. As to quaternary structure, interacts with ptaB.

Its subcellular location is the nucleus. Functionally, transcription factor that controls the expression of genes related to the process of conidiation and adherence and regulates biofilm formation. Controls conidiation and adhesion primarily by affecting the expression of the three regulatory genes flbB, stuA and medA. Required for virulence in an egg and a mouse infection model. The sequence is that of Transcriptional activator somA from Aspergillus fumigatus (strain ATCC MYA-4609 / CBS 101355 / FGSC A1100 / Af293) (Neosartorya fumigata).